The sequence spans 37 residues: Cortex morphogenetic protein A (37 aa).

In terms of assembly, can form a complex with SpoIVA and ClpX.

The protein resides in the forespore. Ensures proper spore envelope assembly. Represses premature cortex assembly until coat assembly successfully initiates. Also participates in a quality-control pathway that selectively removes defective sporulating cells through regulated cell death. Acts as an adaptator that delivers SpoIVA to the ClpXP proteolytic machinery for degradation, specifically in cells that improperly assemble the spore envelope. The protein is Cortex morphogenetic protein A of Bacillus subtilis (strain 168).